The primary structure comprises 289 residues: Thiazole synthase (289 aa).

The active-site Schiff-base intermediate with DXP is the K132. 1-deoxy-D-xylulose 5-phosphate-binding positions include G193, 219-220 (AG), and 241-242 (NT).

Belongs to the ThiG family. Homotetramer. Forms heterodimers with either ThiH or ThiS.

It localises to the cytoplasm. The enzyme catalyses [ThiS sulfur-carrier protein]-C-terminal-Gly-aminoethanethioate + 2-iminoacetate + 1-deoxy-D-xylulose 5-phosphate = [ThiS sulfur-carrier protein]-C-terminal Gly-Gly + 2-[(2R,5Z)-2-carboxy-4-methylthiazol-5(2H)-ylidene]ethyl phosphate + 2 H2O + H(+). The protein operates within cofactor biosynthesis; thiamine diphosphate biosynthesis. Functionally, catalyzes the rearrangement of 1-deoxy-D-xylulose 5-phosphate (DXP) to produce the thiazole phosphate moiety of thiamine. Sulfur is provided by the thiocarboxylate moiety of the carrier protein ThiS. In vitro, sulfur can be provided by H(2)S. The chain is Thiazole synthase from Rhodospirillum rubrum (strain ATCC 11170 / ATH 1.1.1 / DSM 467 / LMG 4362 / NCIMB 8255 / S1).